A 602-amino-acid chain; its full sequence is uncharacterized protein (602 aa).

The Helicase ATP-binding domain occupies 51 to 210 (QYLGTQPRDF…PFVSYQPDAD (160 aa)). Basic and acidic residues predominate over residues 430–439 (PHRESAHDPL). Disordered regions lie at residues 430–452 (PHRE…TERG) and 518–538 (RAQL…ASVH). A compositionally biased stretch (polar residues) spans 523 to 534 (KGATQPATSGAS).

The protein to M.leprae ML1624.

This is an uncharacterized protein from Mycobacterium tuberculosis (strain ATCC 25618 / H37Rv).